A 769-amino-acid polypeptide reads, in one-letter code: P-selectin (769 aa).

The N-terminal stretch at 1–32 (MASCPKAIWSWRFQRVVFRSVQLLCFSILIFE) is a signal peptide. Over 33–717 (LMTQKEVSAW…QEALTYIGGA (685 aa)) the chain is Extracellular. Residues Asn54 and Asn80 are each glycosylated (N-linked (GlcNAc...) asparagine). The region spanning 58–158 (AFCQKYYTDL…PCGKRKRALC (101 aa)) is the C-type lectin domain. 21 disulfide bridges follow: Cys60/Cys158, Cys131/Cys150, Cys163/Cys174, Cys168/Cys183, Cys185/Cys194, Cys200/Cys244, Cys230/Cys257, Cys262/Cys306, Cys292/Cys319, Cys324/Cys368, Cys354/Cys381, Cys386/Cys430, Cys416/Cys443, Cys448/Cys492, Cys478/Cys505, Cys510/Cys554, Cys540/Cys567, Cys581/Cys625, Cys611/Cys638, Cys643/Cys687, and Cys673/Cys700. Glu121, Asn123, and Asn124 together coordinate Ca(2+). Residue Asn123 coordinates a carbohydrate. Residues Glu133 and Asn146 each contribute to the a carbohydrate site. Positions 146 and 147 each coordinate Ca(2+). The EGF-like domain occupies 159–195 (YRASCQDMSCSKQGECIETIGNYTCSCYPGFYGPECE). Asn180 carries an N-linked (GlcNAc...) asparagine glycan. 8 consecutive Sushi domains span residues 198–259 (RECG…QCVA), 260–321 (VQCP…VCKA), 322–383 (IACE…VCQA), 384–445 (LQCQ…ECQA), 446–507 (VTCA…TCEA), 508–569 (SKCP…SCKV), 579–640 (LRCP…TCRA), and 641–702 (VKCS…TCQA). N-linked (GlcNAc...) asparagine glycosylation is found at Asn212 and Asn219. Asn347 carries an N-linked (GlcNAc...) asparagine glycan. N-linked (GlcNAc...) asparagine glycosylation occurs at Asn398. A glycan (N-linked (GlcNAc...) asparagine) is linked at Asn604. Asn655, Asn662, and Asn680 each carry an N-linked (GlcNAc...) asparagine glycan. The helical transmembrane segment at 718–734 (AAGTTGLVTSSILLALL) threads the bilayer. The Cytoplasmic segment spans residues 735–769 (RRRRRQKDDGKSPLNPQSHLGTYGVFTNAAFDPSP). Residues 740–769 (QKDDGKSPLNPQSHLGTYGVFTNAAFDPSP) form a disordered region. The Endocytosis signal motif lies at 757 to 760 (YGVF). Positions 760–769 (FTNAAFDPSP) are interaction with SNX17.

It belongs to the selectin/LECAM family. Interacts with SNX17. Interacts with SELPLG/PSGL1 and PODXL2 and mediates neutrophil adhesion and leukocyte rolling. This interaction requires the sialyl-Lewis X epitope of SELPLG and PODXL2, and specific tyrosine sulfation on SELPLG. Interacts (via C-type lectin domain) with alpha-IIb/beta3 integrin ITGA2B:ITGB3 and alpha-V/beta-3 integrin ITGAV:ITGB3. Interacts with alpha5/beta1 integrin ITGA5:ITGB1 and alpha4/beta1 integrin ITGA4:ITGB.

The protein localises to the cell membrane. Its function is as follows. Ca(2+)-dependent receptor for myeloid cells that binds to carbohydrates on neutrophils and monocytes. Mediates the interaction of activated endothelial cells or platelets with leukocytes. The ligand recognized is sialyl-Lewis X. Mediates rapid rolling of leukocyte rolling over vascular surfaces during the initial steps in inflammation through interaction with SELPLG. Mediates cell-cell interactions and cell adhesion via the interaction with integrin alpha-IIb/beta3 (ITGA2B:ITGB3) and integrin alpha-V/beta-3 (ITGAV:ITGB3). This is P-selectin (SELP) from Ovis aries (Sheep).